The sequence spans 135 residues: Photosystem II extrinsic protein U (135 aa).

The N-terminal stretch at 1-26 (MKNLVRLLAVIALIIGSFWGKVPAQA) is a signal peptide.

Belongs to the PsbU family. PSII is composed of 1 copy each of membrane proteins PsbA, PsbB, PsbC, PsbD, PsbE, PsbF, PsbH, PsbI, PsbJ, PsbK, PsbL, PsbM, PsbT, PsbX, PsbY, PsbZ, Psb30/Ycf12, peripheral proteins PsbO, CyanoQ (PsbQ), PsbU, PsbV and a large number of cofactors. It forms dimeric complexes.

Its subcellular location is the cellular thylakoid membrane. Its function is as follows. One of the extrinsic, lumenal subunits of photosystem II (PSII). PSII is a light-driven water plastoquinone oxidoreductase, using light energy to abstract electrons from H(2)O, generating a proton gradient subsequently used for ATP formation. The extrinsic proteins stabilize the structure of photosystem II oxygen-evolving complex (OEC), the ion environment of oxygen evolution and protect the OEC against heat-induced inactivation. This Microcystis aeruginosa (strain NIES-843 / IAM M-2473) protein is Photosystem II extrinsic protein U.